We begin with the raw amino-acid sequence, 1406 residues long: Sterol 3-beta-glucosyltransferase (1406 aa).

The disordered stretch occupies residues 83 to 231 (ARFDESSDSD…IHSSHESSTS (149 aa)). Residues 110–128 (GSSNPVNSQTEQRSGSQTS) are compositionally biased toward polar residues. Over residues 209-231 (SAGRSQNSSQESSIHSSHESSTS) the composition is skewed to low complexity. One can recognise a GRAM 1 domain in the interval 236–286 (RLMEMFDFNKPEKVLVEYACSLLQSMLLQGYMYVTEGHICFYAYLPRKSTV). Residues 286–385 (VAIKSGYLHK…WVKALQKVIF (100 aa)) enclose the PH domain. Disordered regions lie at residues 457–558 (ASGH…AESA) and 576–622 (LDKR…DGKP). Positions 468-478 (HADRSPRSDRT) are enriched in basic and acidic residues. Polar residues-rich tracts occupy residues 490–499 (GTSQPGNGSA) and 531–548 (SESI…SAVW). The segment covering 576–587 (LDKRACSDERSG) has biased composition (basic and acidic residues). The GRAM 2 domain occupies 730–796 (DRFRAHFALP…KDVENVEKEK (67 aa)). Residues Ser917, Arg918, Asp920, Ala1220, His1222, His1235, Gly1239, Thr1240, Asp1259, and Gln1260 each contribute to the UDP-alpha-D-glucose site. Residues 1334-1406 (QRSIASSTPF…LTNSIHGAGR (73 aa)) form a disordered region. Over residues 1336–1349 (SIASSTPFSPTPSA) the composition is skewed to low complexity. Residues 1355–1375 (QGDDDVEDSEEWTFVGDDNEM) show a composition bias toward acidic residues. Positions 1376–1387 (DMSRRMRDRAIS) are enriched in basic and acidic residues. Positions 1397 to 1406 (LTNSIHGAGR) are enriched in polar residues.

It belongs to the glycosyltransferase 28 family.

It is found in the cytoplasm. The protein resides in the preautophagosomal structure membrane. The catalysed reaction is a sterol + UDP-alpha-D-glucose = a sterol 3-beta-D-glucoside + UDP + H(+). The enzyme catalyses ergosterol + UDP-alpha-D-glucose = ergosteryl 3-beta-D-glucoside + UDP + H(+). Its function is as follows. Sterol glycosyltransferase responsible for the glycosylation of ergosterol to form ergosterol-glucoside. The polypeptide is Sterol 3-beta-glucosyltransferase (Aspergillus clavatus (strain ATCC 1007 / CBS 513.65 / DSM 816 / NCTC 3887 / NRRL 1 / QM 1276 / 107)).